Reading from the N-terminus, the 731-residue chain is MARGDNMKSSNKSTPEPTLSKTLVESSTSSLLSESVVEPEDGQDLSSSAVCSASTVSLPPNENQPIGEHDRCRTVPVLHSIIVERYEGEKCGEMFHGEGVAYFQGGHVYKGSFSHGLMHGYGEYIWSDGLKYQGDFKVNVPMGHGTYTWLNGSTYEGEVHQGIRHGVGMYKCVKTLTVYRGQWYLGKRQGQGEMFYNQEATSWYKGEWVNNCREGWGKRCYPSGNVYEGQWRNNVRHGEGTMRWIDLDQQYSGQWINGIQEGKGTHTWFRKRAPSSQYPRMNEYTGDFVQAMRHGQGQFLYASGALYCGQWKYDKKHGQGRYIFENGRVYEGEFSKDCMAEFPAFTPGLSGITTPFPDENDSSKGASQSSSNASPLGSDMVLNIQTLLNRVSEAHREQEFKQVEFAVLRHMGLLREIYSFYSSLGHEQSLDKIFPLTHLQFSRFLLDCRVHQHGVTLAQIYSLINVHSPFTAILPRECISYIIIIAYHICHKDIESSNNILAACFSKLMKQNIIPNAKSVKGHLFCHPVHAAVAMNYSDKSWEIYQALCEAHSVFTVRQFVLMLKDLCLYDNELTVSKLIRTLSVDSPAIHDGTYSNLDLEMSFLEFFEALLGCAELKGQKIQSYDESQTDASLQDHISSLSKEKEQRQSPVLAYQETELNDWMHKTQQFFNQTFLPAYELKVKVEEETFRLRDNTTTRYTEQLELKEKQEQDADGNELCPVTTTSVTSIH.

The interval Met-1–His-69 is disordered. Residues Met-7 to Pro-17 are compositionally biased toward polar residues. Composition is skewed to low complexity over residues Thr-18–Val-36 and Ser-46–Ser-57. 10 MORN repeats span residues Tyr-86–Val-108, Tyr-109–Lys-131, Tyr-132–Thr-154, Tyr-155–Thr-177, Tyr-179–Thr-201, Tyr-204–Val-226, Tyr-227–Gln-249, Tyr-251–Ala-273, Tyr-284–Leu-306, and Tyr-307–Val-329. Disordered stretches follow at residues Thr-353–Gly-377 and Lys-709–His-731. Positions Ser-363 to Gly-377 are enriched in low complexity. Over residues Val-722–His-731 the composition is skewed to polar residues.

It localises to the cytoplasm. The protein resides in the cytoskeleton. The protein localises to the cilium axoneme. It is found in the cell projection. Its subcellular location is the cilium. It localises to the flagellum. May function as part of axonemal radial spoke complexes. Radial spoke complexes are important for ciliary motility. The chain is Radial spoke head 10 homolog B (rsph10b) from Danio rerio (Zebrafish).